The sequence spans 161 residues: uncharacterized protein (161 aa).

The next 2 helical transmembrane spans lie at 13-35 (VAAV…PHAN) and 40-62 (VFSA…PFIS).

It is found in the cell membrane. This is an uncharacterized protein from Archaeoglobus fulgidus (strain ATCC 49558 / DSM 4304 / JCM 9628 / NBRC 100126 / VC-16).